The following is a 620-amino-acid chain: Chaperone protein HscA homolog (620 aa).

Belongs to the heat shock protein 70 family.

In terms of biological role, chaperone involved in the maturation of iron-sulfur cluster-containing proteins. Has a low intrinsic ATPase activity which is markedly stimulated by HscB. The chain is Chaperone protein HscA homolog from Shewanella sediminis (strain HAW-EB3).